The primary structure comprises 185 residues: Ribosome-recycling factor (185 aa).

The protein belongs to the RRF family.

The protein resides in the cytoplasm. In terms of biological role, responsible for the release of ribosomes from messenger RNA at the termination of protein biosynthesis. May increase the efficiency of translation by recycling ribosomes from one round of translation to another. The sequence is that of Ribosome-recycling factor from Xanthomonas oryzae pv. oryzae (strain MAFF 311018).